The following is a 466-amino-acid chain: GTPase Der (466 aa).

EngA-type G domains lie at 30–193 (PVVA…PEVS) and 203–376 (RRVA…ASWD). GTP is bound by residues 36–43 (GRPNVGKS), 83–87 (DTGGW), 145–148 (NKVD), 209–216 (GKPNVGKS), 256–260 (DTAGL), and 321–324 (NKWD). Residues 377–459 (TRIATGPLNS…PIRINVRVRE (83 aa)) enclose the KH-like domain.

This sequence belongs to the TRAFAC class TrmE-Era-EngA-EngB-Septin-like GTPase superfamily. EngA (Der) GTPase family. In terms of assembly, associates with the 50S ribosomal subunit.

GTPase that plays an essential role in the late steps of ribosome biogenesis. The polypeptide is GTPase Der (Mycobacterium avium (strain 104)).